Reading from the N-terminus, the 486-residue chain is Palmitoleoyl-protein carboxylesterase notum2 (486 aa).

An N-terminal signal peptide occupies residues 1-18 (MRILEIFAILLILKEVRP). A glycan (N-linked (GlcNAc...) asparagine) is linked at N183. Catalysis depends on charge relay system residues S223, D331, and H380.

This sequence belongs to the pectinacetylesterase family. Notum subfamily.

It is found in the secreted. The catalysed reaction is [Wnt protein]-O-(9Z)-hexadecenoyl-L-serine + H2O = [Wnt protein]-L-serine + (9Z)-hexadecenoate + H(+). In terms of biological role, carboxylesterase that acts as a key negative regulator of the Wnt signaling pathway by specifically mediating depalmitoleoylation of WNT proteins. Serine palmitoleoylation of WNT proteins is required for efficient binding to frizzled receptors. This chain is Palmitoleoyl-protein carboxylesterase notum2, found in Xenopus laevis (African clawed frog).